The chain runs to 56 residues: uncharacterized protein (56 aa).

Residues 15–56 (SIGNISSGNINNSIGNSSSSGCDDVFNNSTNNNNNNNNNNNK) are disordered.

This is an uncharacterized protein from Dictyostelium discoideum (Social amoeba).